We begin with the raw amino-acid sequence, 527 residues long: Sulfate adenylyltransferase (527 aa).

Residues 1-176 are N-terminal; the sequence is MPIPTPHGGK…LQGINYPKHY (176 aa). The catalytic stretch occupies residues 177–406; sequence DYVDARKTPT…LRETNPPRSK (230 aa). Gln206 contacts sulfate. Residues 206 to 209 and 302 to 305 contribute to the ATP site; these read QTRN and GRDH. Residues Thr207, Arg208, and Asn209 contribute to the active site. Position 208 (Arg208) interacts with sulfate. Ala306 is a binding site for sulfate. Val344 provides a ligand contact to ATP. Residues 407–527 are required for oligomerization; adenylyl-sulfate kinase-like; the sequence is QGFAILIDNS…VNYLKDQGFY (121 aa).

It belongs to the sulfate adenylyltransferase family. In terms of assembly, homohexamer. Dimer of trimers.

It localises to the cytoplasm. It catalyses the reaction sulfate + ATP + H(+) = adenosine 5'-phosphosulfate + diphosphate. Its pathway is sulfur metabolism; hydrogen sulfide biosynthesis; sulfite from sulfate: step 1/3. Functionally, catalyzes the first intracellular reaction of sulfate assimilation, forming adenosine-5'-phosphosulfate (APS) from inorganic sulfate and ATP. Plays an important role in sulfate activation as a component of the biosynthesis pathway of sulfur-containing amino acids. This is Sulfate adenylyltransferase from Candida albicans (strain SC5314 / ATCC MYA-2876) (Yeast).